The following is a 309-amino-acid chain: Xylose/arabinose import permease protein XacI (309 aa).

The next 6 membrane-spanning stretches (helical) occupy residues 29-49 (LVVF…MTAI), 89-109 (LIMS…AAYG), 121-141 (MLML…VPLA), 170-190 (ELVP…TILF), 227-247 (MFGV…LFAF), and 282-302 (AAFL…EQFA). The ABC transmembrane type-1 domain maps to 85–297 (FFNSLIMSIP…VPTLILYVAF (213 aa)).

It belongs to the binding-protein-dependent transport system permease family. As to quaternary structure, the complex is composed of two ATP-binding proteins (XacJ and XacK), two transmembrane proteins (XacH and XacI) and a solute-binding protein (XacG).

The protein localises to the cell membrane. Its function is as follows. Part of the ABC transporter complex XacGHIJK involved in the uptake of xylose and arabinose. Responsible for the translocation of the substrate across the membrane. The sequence is that of Xylose/arabinose import permease protein XacI from Haloferax volcanii (strain ATCC 29605 / DSM 3757 / JCM 8879 / NBRC 14742 / NCIMB 2012 / VKM B-1768 / DS2) (Halobacterium volcanii).